The primary structure comprises 1749 residues: MADEEAGGTERMEISAELPQTPQRLASWWDQQVDFYTAFLHHLAQLVPEIYFAEMDPDLEKQEESVQMSIFTPLEWYLFGEDPDICLEKLKHSGAFQLCGRVFKSGETTYSCRDCAIDPTCVLCMDCFQDSVHKNHRYKMHTSTGGGFCDCGDTEAWKTGPFCVNHEPGRAGTIKENSRCPLNEEVIVQARKIFPSVIKYVVEMTIWEEEKELPPELQIREKNERYYCVLFNDEHHSYDHVIYSLQRALDCELAEAQLHTTAIDKEGRRAVKAGAYAACQEAKEDIKSHSENVSQHPLHVEVLHSEIMAHQKFALRLGSWMNKIMSYSSDFRQIFCQACLREEPDSENPCLISRLMLWDAKLYKGARKILHELIFSSFFMEMEYKKLFAMEFVKYYKQLQKEYISDDHDRSISITALSVQMFTVPTLARHLIEEQNVISVITETLLEVLPEYLDRNNKFNFQGYSQDKLGRVYAVICDLKYILISKPTIWTERLRMQFLEGFRSFLKILTCMQGMEEIRRQVGQHIEVDPDWEAAIAIQMQLKNILLMFQEWCACDEELLLVAYKECHKAVMRCSTSFISSSKTVVQSCGHSLETKSYRVSEDLVSIHLPLSRTLAGLHVRLSRLGAVSRLHEFVSFEDFQVEVLVEYPLRCLVLVAQVVAEMWRRNGLSLISQVFYYQDVKCREEMYDKDIIMLQIGASLMDPNKFLLLVLQRYELAEAFNKTISTKDQDLIKQYNTLIEEMLQVLIYIVGERYVPGVGNVTKEEVTMREIIHLLCIEPMPHSAIAKNLPENENNETGLENVINKVATFKKPGVSGHGVYELKDESLKDFNMYFYHYSKTQHSKAEHMQKKRRKQENKDEALPPPPPPEFCPAFSKVINLLNCDIMMYILRTVFERAIDTDSNLWTEGMLQMAFHILALGLLEEKQQLQKAPEEEVTFDFYHKASRLGSSAMNIQMLLEKLKGIPQLEGQKDMITWILQMFDTVKRLREKSCLIVATTSGSESIKNDEITHDKEKAERKRKAEAARLHRQKIMAQMSALQKNFIETHKLMYDNTSEMPGKEDSIMEEESTPAVSDYSRIALGPKRGPSVTEKEVLTCILCQEEQEVKIENNAMVLSACVQKSTALTQHRGKPIELSGEALDPLFMDPDLAYGTYTGSCGHVMHAVCWQKYFEAVQLSSQQRIHVDLFDLESGEYLCPLCKSLCNTVIPIIPLQPQKINSENADALAQLLTLARWIQTVLARISGYNIRHAKGENPIPIFFNQGMGDSTLEFHSILSFGVESSIKYSNSIKEMVILFATTIYRIGLKVPPDERDPRVPMLTWSTCAFTIQAIENLLGDEGKPLFGALQNRQHNGLKALMQFAVAQRITCPQVLIQKHLVRLLSVVLPNIKSEDTPCLLSIDLFHVLVGAVLAFPSLYWDDPVDLQPSSVSSSYNHLYLFHLITMAHMLQILLTVDTGLPLAQVQEDSEEAHSASSFFAEISQYTSGSIGCDIPGWYLWVSLKNGITPYLRCAALFFHYLLGVTPPEELHTNSAEGEYSALCSYLSLPTNLFLLFQEYWDTVRPLLQRWCADPALLNCLKQKNTVVRYPRKRNSLIELPDDYSCLLNQASHFRCPRSADDERKHPVLCLFCGAILCSQNICCQEIVNGEEVGACIFHALHCGAGVCIFLKIRECRVVLVEGKARGCAYPAPYLDEYGETDPGLKRGNPLHLSRERYRKLHLVWQQHCIIEEIARSQETNQMLFGFNWQLL.

An N-acetylalanine modification is found at Ala2. A Phosphothreonine modification is found at Thr21. The UBR-type zinc finger occupies 97 to 168 (QLCGRVFKSG…TGPFCVNHEP (72 aa)). Cys99, Cys112, Cys115, Cys124, Cys127, His133, and His136 together coordinate Zn(2+). Residue Phe148 participates in a peptide binding. Position 149 (Cys149) interacts with Zn(2+). Asp150 is an a peptide binding site. Cys151 is a Zn(2+) binding site. Residue Asp153 coordinates a peptide. Zn(2+) is bound by residues Cys163 and His166. Positions 842-868 (QHSKAEHMQKKRRKQENKDEALPPPPP) are disordered. Residues 1019–1054 (RKRKAEAARLHRQKIMAQMSALQKNFIETHKLMYDN) form a UBC2-binding region (U2BR) region. Zn(2+) contacts are provided by Cys1098, Cys1101, Cys1159, His1161, His1164, and Cys1167. The segment at 1098 to 1201 (CILCQEEQEV…SGEYLCPLCK (104 aa)) adopts an RING-type; atypical zinc-finger fold. A Phosphoserine modification is found at Ser1179. Residues Cys1197, Cys1200, Cys1627, Cys1630, and Cys1653 each coordinate Zn(2+).

The protein belongs to the E3 ubiquitin-protein ligase UBR1-like family. As to quaternary structure, interacts with RECQL4. Broadly expressed, with highest levels in skeletal muscle, kidney and pancreas. Present in acinar cells of the pancreas (at protein level).

The protein localises to the cytoplasm. Its subcellular location is the cytosol. It catalyses the reaction S-ubiquitinyl-[E2 ubiquitin-conjugating enzyme]-L-cysteine + [acceptor protein]-L-lysine = [E2 ubiquitin-conjugating enzyme]-L-cysteine + N(6)-ubiquitinyl-[acceptor protein]-L-lysine.. The protein operates within protein modification; protein ubiquitination. Its activity is regulated as follows. Inhibited by the small-molecule compound RF-C11, which bears two heterovalent ligands: RF-C11 inhibits activity toward both type-1 and type-2 N-degrons. In terms of biological role, E3 ubiquitin-protein ligase which is a component of the N-end rule pathway. Recognizes and binds proteins bearing specific N-terminal residues that are destabilizing according to the N-end rule, leading to their ubiquitination and subsequent degradation. Recognizes both type-1 and type-2 N-degrons, containing positively charged amino acids (Arg, Lys and His) and bulky and hydrophobic amino acids, respectively. Does not ubiquitinate proteins that are acetylated at the N-terminus. In contrast, it strongly binds methylated N-degrons. Binds leucine and is a negative regulator of the leucine-mTOR signaling pathway, thereby controlling cell growth. The protein is E3 ubiquitin-protein ligase UBR1 of Homo sapiens (Human).